The chain runs to 463 residues: GTPase Der (463 aa).

2 EngA-type G domains span residues 3 to 166 (PVVA…PESG) and 177 to 350 (IRIA…QSAM). GTP is bound by residues 9–16 (GRTNVGKS), 56–60 (DTGGI), 118–121 (NKID), 183–190 (GRPNVGKS), 230–234 (DTAGI), and 295–298 (NKWD). Positions 351-435 (LDLSASRLTQ…PLKLVFKSAE (85 aa)) constitute a KH-like domain.

This sequence belongs to the TRAFAC class TrmE-Era-EngA-EngB-Septin-like GTPase superfamily. EngA (Der) GTPase family. Associates with the 50S ribosomal subunit.

Its function is as follows. GTPase that plays an essential role in the late steps of ribosome biogenesis. In Methylococcus capsulatus (strain ATCC 33009 / NCIMB 11132 / Bath), this protein is GTPase Der.